Here is a 419-residue protein sequence, read N- to C-terminus: Creatine kinase S-type, mitochondrial (419 aa).

Residues 1-39 (MASTFSKLLTGRNASLLFATLGTGALTTGYLLNKQNVCA) constitute a mitochondrion transit peptide. The cardiolipin-binding stretch occupies residues 40–64 (AAREQHKLFPPSADYPDLRKHNNCM). Positions 46–132 (KLFPPSADYP…FDPVIKLRHN (87 aa)) constitute a Phosphagen kinase N-terminal domain. The 243-residue stretch at 159–401 (YVLSSRVRTG…NYLVDCEKKL (243 aa)) folds into the Phosphagen kinase C-terminal domain. ATP contacts are provided by residues 162-166 (SSRVR) and His-225. Tyr-255 bears the Phosphotyrosine mark. ATP-binding positions include Arg-270, Arg-326, 354–359 (RGTGGV), and Asp-369. Thr-356 is subject to Phosphothreonine.

Belongs to the ATP:guanido phosphotransferase family. As to quaternary structure, exists as an octamer composed of four CKMT2 homodimers.

It localises to the mitochondrion inner membrane. The enzyme catalyses creatine + ATP = N-phosphocreatine + ADP + H(+). In terms of biological role, reversibly catalyzes the transfer of phosphate between ATP and various phosphogens (e.g. creatine phosphate). Creatine kinase isoenzymes play a central role in energy transduction in tissues with large, fluctuating energy demands, such as skeletal muscle, heart, brain and spermatozoa. The polypeptide is Creatine kinase S-type, mitochondrial (CKMT2) (Bos taurus (Bovine)).